A 173-amino-acid chain; its full sequence is Catabolic 3-dehydroquinase (173 aa).

Tyrosine 26 (proton acceptor) is an active-site residue. Residues asparagine 102, histidine 108, and aspartate 115 each coordinate substrate. Histidine 128 acts as the Proton donor in catalysis. Residues 129–130 (VS) and arginine 139 contribute to the substrate site.

The protein belongs to the type-II 3-dehydroquinase family. As to quaternary structure, homododecamer. Adopts a ring-like structure, composed of an arrangement of two hexameric rings stacked on top of one another.

It carries out the reaction 3-dehydroquinate = 3-dehydroshikimate + H2O. It functions in the pathway aromatic compound metabolism; 3,4-dihydroxybenzoate biosynthesis; 3,4-dihydroxybenzoate from 3-dehydroquinate: step 1/2. Its function is as follows. 3-dehydroquinate dehydratase; part of the qa gene cluster that mediates the catabolism of quinic acid (QA) and as such, allows the use of QA as a sole carbon source. Catalyzes the second reaction in the inducible quinic acid catabolic pathway by converting 3-dehydroquinate into 3-dehydroshikimate. The qa cluster encodes 3 inducible enymes (qa-2, qa-3 and qa-4) catalyzing the first three reactions in the catabolism of quinic acid to protocatechuic acid (also known as 3,4-Dihydroxybenzoic acid). In Neurospora crassa (strain ATCC 24698 / 74-OR23-1A / CBS 708.71 / DSM 1257 / FGSC 987), this protein is Catabolic 3-dehydroquinase.